Here is a 341-residue protein sequence, read N- to C-terminus: Elongation factor Ts (341 aa).

The interval 80–83 (TDFV) is involved in Mg(2+) ion dislocation from EF-Tu.

Belongs to the EF-Ts family.

The protein resides in the cytoplasm. Functionally, associates with the EF-Tu.GDP complex and induces the exchange of GDP to GTP. It remains bound to the aminoacyl-tRNA.EF-Tu.GTP complex up to the GTP hydrolysis stage on the ribosome. This chain is Elongation factor Ts, found in Lactobacillus helveticus (strain DPC 4571).